Consider the following 131-residue polypeptide: uncharacterized protein (131 aa).

The tract at residues 16 to 71 (MSEQERDEVLEDDDDDEDNKSSQQERDEFVEDDDNNSIQSSPSCAQPLLTQYHDDG) is disordered. Over residues 20–33 (ERDEVLEDDDDDED) the composition is skewed to acidic residues.

This is an uncharacterized protein from Dictyostelium discoideum (Social amoeba).